Consider the following 654-residue polypeptide: Acetyl-coenzyme A synthetase (654 aa).

CoA contacts are provided by residues 193-196 and threonine 313; that span reads RRGK. Residues 389-391, 413-418, aspartate 506, and arginine 521 each bind ATP; these read GEP and DTWWQT. Serine 529 is a binding site for CoA. Position 532 (arginine 532) interacts with ATP. Residues histidine 545 and valine 548 each contribute to the Mg(2+) site. An N6-acetyllysine modification is found at lysine 619.

The protein belongs to the ATP-dependent AMP-binding enzyme family. Mg(2+) serves as cofactor. In terms of processing, acetylated. Deacetylation by the SIR2-homolog deacetylase activates the enzyme.

It catalyses the reaction acetate + ATP + CoA = acetyl-CoA + AMP + diphosphate. Functionally, catalyzes the conversion of acetate into acetyl-CoA (AcCoA), an essential intermediate at the junction of anabolic and catabolic pathways. AcsA undergoes a two-step reaction. In the first half reaction, AcsA combines acetate with ATP to form acetyl-adenylate (AcAMP) intermediate. In the second half reaction, it can then transfer the acetyl group from AcAMP to the sulfhydryl group of CoA, forming the product AcCoA. This Wolinella succinogenes (strain ATCC 29543 / DSM 1740 / CCUG 13145 / JCM 31913 / LMG 7466 / NCTC 11488 / FDC 602W) (Vibrio succinogenes) protein is Acetyl-coenzyme A synthetase.